Reading from the N-terminus, the 393-residue chain is Inulin fructotransferase [DFA-I-forming] (393 aa).

The enzyme catalyses Produces alpha-D-fructofuranose beta-D-fructofuranose 1,2':2,1'-dianhydride (DFA I) by successively eliminating the diminishing (2-&gt;1)-beta-D-fructan (inulin) chain from the terminal D-fructosyl-D-fructosyl disaccharide.. This is Inulin fructotransferase [DFA-I-forming] from Arthrobacter globiformis.